We begin with the raw amino-acid sequence, 108 residues long: Somatoliberin (108 aa).

Residues 1-20 (MPLWVFFFVILTLSNSSHCS) form the signal peptide. Residues 21 to 31 (PPPPLTLRMRR) constitute a propeptide that is removed on maturation. Position 75 is a leucine amide (Leu75). Residues 78–108 (QVDSMWAEQKQMELESILVALLQKHSRNSQG) constitute a propeptide that is removed on maturation.

Belongs to the glucagon family.

Its subcellular location is the secreted. Functionally, GRF is released by the hypothalamus and acts on the adenohypophyse to stimulate the secretion of growth hormone. In Homo sapiens (Human), this protein is Somatoliberin (GHRH).